Consider the following 963-residue polypeptide: Importin-13 (963 aa).

20 HEAT repeats span residues 24 to 54 (ENVEKALHQLYYDPNIENKNLAQKWLMQAQV), 56 to 88 (PQAWHFSWQLLQPDKVPEIQYFGASALHIKISR), 95 to 135 (TDQY…LSMM), 142 to 179 (AVADMVRLFQAEDSPVDGQGRCLALLELLTVLPEEFQT), 194 to 231 (LAVECGAVFPLLEQLLQQPSSPSCVRQKVLKCFSSWVQ), 236 to 268 (LQDCEALIQAAFAALQDSELFDSSVEAIVNAIS), 276 to 325 (VNTL…ALLD), 330 to 372 (WQSF…DDIL), 375 to 438 (EAEK…YEML), 440 to 476 (AELLSNLYDKLGRLLTSSEEPYSWQHTEALLYGFQSI), 487 to 522 (VVPGLIGLIPRISISNVQLADTVMFTIGALSEWLAD), 524 to 558 (PVMINSVLPLVLHALGNPELSVSSVSTLKKICREC), 562 to 600 (LPPYAANIVAVSQDVLMKQIHKTSQCMWLMQALGFLLSA), 603 to 648 (VEEI…SNLF), 676 to 716 (PVVV…VKTL), 720 to 754 (FAPMVPQLCEMLGRMYSTIPQASALDLTRQLVHIF), 761 to 803 (FPPI…ALKR), 815 to 845 (VKAVFQCAVLALKFPEAPTVKASCGFFTELL), 860 to 893 (EDGRMLLIAVLEAIGGQASRSLMDCFADILFALN), and 897 to 931 (FSLLSMWIKEALQPPGFPSARLSPEQKDTFSQQIL). One can recognise an Importin N-terminal domain in the interval 45-111 (AQKWLMQAQV…KAQLFTQITR (67 aa)).

Belongs to the importin beta family. Interacts with UBC9, RAN, RBM8A, eIF-1A and PAX6. In terms of tissue distribution, expressed in fetal brain, heart, intestine and kidney.

The protein localises to the cytoplasm. The protein resides in the nucleus. Functions in nuclear protein import as nuclear transport receptor. Serves as receptor for nuclear localization signals (NLS) in cargo substrates. Is thought to mediate docking of the importin/substrate complex to the nuclear pore complex (NPC) through binding to nucleoporin and the complex is subsequently translocated through the pore by an energy requiring, Ran-dependent mechanism. At the nucleoplasmic side of the NPC, Ran binds to the importin, the importin/substrate complex dissociates and importin is re-exported from the nucleus to the cytoplasm where GTP hydrolysis releases Ran. The directionality of nuclear import is thought to be conferred by an asymmetric distribution of the GTP- and GDP-bound forms of Ran between the cytoplasm and nucleus. Mediates the nuclear import of UBC9, the RBM8A/MAGOH complex, PAX6 and probably other members of the paired homeobox family. Also mediates nuclear export of eIF-1A, and the cytoplasmic release of eIF-1A is triggered by the loading of import substrates onto IPO13. In Homo sapiens (Human), this protein is Importin-13 (IPO13).